The chain runs to 45 residues: Large ribosomal subunit protein bL34 (45 aa).

The segment at 1-45 (MTKRTFGGTSRKRKRVSGFRVRMRSHTGRRVIRTRRKRGRSRLAA) is disordered. Positions 10 to 45 (SRKRKRVSGFRVRMRSHTGRRVIRTRRKRGRSRLAA) are enriched in basic residues.

It belongs to the bacterial ribosomal protein bL34 family.

The chain is Large ribosomal subunit protein bL34 from Synechococcus sp. (strain CC9311).